The sequence spans 396 residues: 1-deoxy-D-xylulose 5-phosphate reductoisomerase (396 aa).

Positions 13, 14, 15, 16, and 127 each coordinate NADPH. Lysine 128 contacts 1-deoxy-D-xylulose 5-phosphate. Glutamate 129 is an NADPH binding site. Aspartate 153 provides a ligand contact to Mn(2+). Residues serine 154, glutamate 155, serine 184, and histidine 207 each contribute to the 1-deoxy-D-xylulose 5-phosphate site. Position 155 (glutamate 155) interacts with Mn(2+). Glycine 213 contributes to the NADPH binding site. Residues serine 220, asparagine 225, lysine 226, and glutamate 229 each contribute to the 1-deoxy-D-xylulose 5-phosphate site. Glutamate 229 contacts Mn(2+).

The protein belongs to the DXR family. Mg(2+) serves as cofactor. Requires Mn(2+) as cofactor.

The enzyme catalyses 2-C-methyl-D-erythritol 4-phosphate + NADP(+) = 1-deoxy-D-xylulose 5-phosphate + NADPH + H(+). Its pathway is isoprenoid biosynthesis; isopentenyl diphosphate biosynthesis via DXP pathway; isopentenyl diphosphate from 1-deoxy-D-xylulose 5-phosphate: step 1/6. Catalyzes the NADPH-dependent rearrangement and reduction of 1-deoxy-D-xylulose-5-phosphate (DXP) to 2-C-methyl-D-erythritol 4-phosphate (MEP). In Pseudomonas fluorescens (strain ATCC BAA-477 / NRRL B-23932 / Pf-5), this protein is 1-deoxy-D-xylulose 5-phosphate reductoisomerase.